Here is a 73-residue protein sequence, read N- to C-terminus: U-scoloptoxin(03)-Ssd1b (73 aa).

The signal sequence occupies residues 1–23 (MKSSMAVLLVMGLIIFTLDKCYS).

In terms of processing, contains 3 disulfide bonds. In terms of tissue distribution, expressed by the venom gland.

The protein resides in the secreted. This Scolopendra dehaani (Thai centipede) protein is U-scoloptoxin(03)-Ssd1b.